Here is a 536-residue protein sequence, read N- to C-terminus: CTP synthase (536 aa).

The interval 1-268 (MKSKFIFITG…GKVLCKLFNI (268 aa)) is amidoligase domain. Residue Ser14 coordinates CTP. Residue Ser14 coordinates UTP. 15–20 (SLGKGL) is a binding site for ATP. Tyr55 contacts L-glutamine. Asp72 contributes to the ATP binding site. Residues Asp72 and Glu142 each coordinate Mg(2+). CTP contacts are provided by residues 149 to 151 (DIE), 189 to 194 (KTKPMQ), and Lys225. UTP is bound by residues 189–194 (KTKPMQ) and Lys225. A Glutamine amidotransferase type-1 domain is found at 293 to 535 (TIALVGKYVE…IKAAVDNKIN (243 aa)). Gly356 contributes to the L-glutamine binding site. The Nucleophile; for glutamine hydrolysis role is filled by Cys383. L-glutamine contacts are provided by residues 384-387 (LGMQ), Glu407, and Arg463. Residues His508 and Glu510 contribute to the active site.

It belongs to the CTP synthase family. In terms of assembly, homotetramer.

The catalysed reaction is UTP + L-glutamine + ATP + H2O = CTP + L-glutamate + ADP + phosphate + 2 H(+). The enzyme catalyses L-glutamine + H2O = L-glutamate + NH4(+). It carries out the reaction UTP + NH4(+) + ATP = CTP + ADP + phosphate + 2 H(+). It participates in pyrimidine metabolism; CTP biosynthesis via de novo pathway; CTP from UDP: step 2/2. With respect to regulation, allosterically activated by GTP, when glutamine is the substrate; GTP has no effect on the reaction when ammonia is the substrate. The allosteric effector GTP functions by stabilizing the protein conformation that binds the tetrahedral intermediate(s) formed during glutamine hydrolysis. Inhibited by the product CTP, via allosteric rather than competitive inhibition. In terms of biological role, catalyzes the ATP-dependent amination of UTP to CTP with either L-glutamine or ammonia as the source of nitrogen. Regulates intracellular CTP levels through interactions with the four ribonucleotide triphosphates. In Treponema denticola (strain ATCC 35405 / DSM 14222 / CIP 103919 / JCM 8153 / KCTC 15104), this protein is CTP synthase.